The primary structure comprises 436 residues: GTPase Der (436 aa).

EngA-type G domains follow at residues 3-167 (NIVA…PIKP) and 177-352 (PRFA…ENRQ). GTP contacts are provided by residues 9–16 (GRPNVGKS), 56–60 (DTGGY), 119–122 (NKVD), 183–190 (GRPNAGKS), 230–234 (DTAGI), and 295–298 (NKWD). The KH-like domain occupies 353 to 436 (QRISTSKFNE…VPIDIYIREK (84 aa)).

The protein belongs to the TRAFAC class TrmE-Era-EngA-EngB-Septin-like GTPase superfamily. EngA (Der) GTPase family. In terms of assembly, associates with the 50S ribosomal subunit.

Its function is as follows. GTPase that plays an essential role in the late steps of ribosome biogenesis. This chain is GTPase Der, found in Flavobacterium psychrophilum (strain ATCC 49511 / DSM 21280 / CIP 103535 / JIP02/86).